We begin with the raw amino-acid sequence, 149 residues long: Lipoprotein signal peptidase (149 aa).

Transmembrane regions (helical) follow at residues 53-73 and 89-109; these read MPGKSWLFFISALLVIMALVI and GLIAGGALGNLIDRYFYGFVI. Active-site residues include aspartate 110 and aspartate 124. The helical transmembrane segment at 119–139 threads the bilayer; that stretch reads VFNLADSAIVCGGILLLILVL.

It belongs to the peptidase A8 family.

It localises to the cell membrane. It catalyses the reaction Release of signal peptides from bacterial membrane prolipoproteins. Hydrolyzes -Xaa-Yaa-Zaa-|-(S,diacylglyceryl)Cys-, in which Xaa is hydrophobic (preferably Leu), and Yaa (Ala or Ser) and Zaa (Gly or Ala) have small, neutral side chains.. Its pathway is protein modification; lipoprotein biosynthesis (signal peptide cleavage). In terms of biological role, this protein specifically catalyzes the removal of signal peptides from prolipoproteins. This is Lipoprotein signal peptidase from Syntrophomonas wolfei subsp. wolfei (strain DSM 2245B / Goettingen).